The chain runs to 462 residues: Proline--tRNA ligase (462 aa).

Belongs to the class-II aminoacyl-tRNA synthetase family. ProS type 3 subfamily. Homodimer.

It is found in the cytoplasm. The catalysed reaction is tRNA(Pro) + L-proline + ATP = L-prolyl-tRNA(Pro) + AMP + diphosphate. Functionally, catalyzes the attachment of proline to tRNA(Pro) in a two-step reaction: proline is first activated by ATP to form Pro-AMP and then transferred to the acceptor end of tRNA(Pro). The protein is Proline--tRNA ligase of Thermoplasma volcanium (strain ATCC 51530 / DSM 4299 / JCM 9571 / NBRC 15438 / GSS1).